Here is a 160-residue protein sequence, read N- to C-terminus: Phosphopantetheine adenylyltransferase (160 aa).

Ser8 provides a ligand contact to substrate. Residues Ser8–Phe9 and His16 each bind ATP. 3 residues coordinate substrate: Lys40, Leu74, and Lys88. Residues Gly89–Arg91, Glu99, and Tyr124–Thr130 each bind ATP.

It belongs to the bacterial CoaD family. In terms of assembly, homohexamer. Requires Mg(2+) as cofactor.

It localises to the cytoplasm. It carries out the reaction (R)-4'-phosphopantetheine + ATP + H(+) = 3'-dephospho-CoA + diphosphate. It functions in the pathway cofactor biosynthesis; coenzyme A biosynthesis; CoA from (R)-pantothenate: step 4/5. In terms of biological role, reversibly transfers an adenylyl group from ATP to 4'-phosphopantetheine, yielding dephospho-CoA (dPCoA) and pyrophosphate. The protein is Phosphopantetheine adenylyltransferase of Thermus thermophilus (strain ATCC BAA-163 / DSM 7039 / HB27).